A 340-amino-acid polypeptide reads, in one-letter code: MALIHEILGKLSLEGNQSSSRQSKLGSVKAATHFDAEKDAAAIETAIKTKGVDELTIINILTNRSNEQRQDIAFAFHRRTKKDLPSALKGALSGNLETVMLGLIKTRPQYDASELKASMKGLGTDEDTLIEIICSRTNKELLDIQNAYRELFKTELEKDIMSDTSGDFRKLMVALAKGRRQEDGNMVDYEKIDQDARELYEAGVKRKGTDVTKWITIMTERSHPHLQKVFERYKSYSPYDIEESIKKEVKGDLENAFLNLVQCIQNKPLYFADRLYESMKGKGTKDKILIRIMVSRRNLDMLKIRQEFKKKYGKSLHYFIGQDTKGDYQRALLNLCGGDD.

The tract at residues Ala-2–Leu-25 is P10 binding site. Ser-27 is subject to Phosphoserine; by PKC. Annexin repeat units follow at residues Phe-34–Lys-105, Thr-106–Lys-177, Glu-190–Gln-262, and Asn-266–Gly-337.

This sequence belongs to the annexin family. In terms of assembly, tetramer of 2 light chains (p10 proteins) and 2 heavy chains (p36 proteins). In terms of tissue distribution, adult brain, heart, striated muscle, liver, kidney, and very high levels in skin.

The protein localises to the secreted. Its subcellular location is the extracellular space. The protein resides in the extracellular matrix. It localises to the basement membrane. In terms of biological role, calcium-regulated membrane-binding protein whose affinity for calcium is greatly enhanced by anionic phospholipids. It binds two calcium ions with high affinity. The chain is Annexin A2-B (anxa2-b) from Xenopus laevis (African clawed frog).